A 65-amino-acid polypeptide reads, in one-letter code: Small ribosomal subunit protein eS17 (65 aa).

Belongs to the eukaryotic ribosomal protein eS17 family.

This Methanocella arvoryzae (strain DSM 22066 / NBRC 105507 / MRE50) protein is Small ribosomal subunit protein eS17.